The chain runs to 436 residues: 3-ketoacyl-CoA thiolase (436 aa).

The active-site Acyl-thioester intermediate is the Cys-99. Residues His-392 and Cys-422 each act as proton acceptor in the active site.

This sequence belongs to the thiolase-like superfamily. Thiolase family. Heterotetramer of two alpha chains (FadJ) and two beta chains (FadI).

It localises to the cytoplasm. It carries out the reaction an acyl-CoA + acetyl-CoA = a 3-oxoacyl-CoA + CoA. Its pathway is lipid metabolism; fatty acid beta-oxidation. In terms of biological role, catalyzes the final step of fatty acid oxidation in which acetyl-CoA is released and the CoA ester of a fatty acid two carbons shorter is formed. In Salmonella paratyphi C (strain RKS4594), this protein is 3-ketoacyl-CoA thiolase.